The primary structure comprises 588 residues: Sulfite reductase [NADPH] hemoprotein beta-component (588 aa).

[4Fe-4S] cluster-binding residues include cysteine 442, cysteine 448, cysteine 487, and cysteine 491. A siroheme-binding site is contributed by cysteine 491.

It belongs to the nitrite and sulfite reductase 4Fe-4S domain family. In terms of assembly, alpha(8)-beta(8). The alpha component is a flavoprotein, the beta component is a hemoprotein. Siroheme is required as a cofactor. The cofactor is [4Fe-4S] cluster.

It carries out the reaction hydrogen sulfide + 3 NADP(+) + 3 H2O = sulfite + 3 NADPH + 4 H(+). It functions in the pathway sulfur metabolism; hydrogen sulfide biosynthesis; hydrogen sulfide from sulfite (NADPH route): step 1/1. Functionally, component of the sulfite reductase complex that catalyzes the 6-electron reduction of sulfite to sulfide. This is one of several activities required for the biosynthesis of L-cysteine from sulfate. This Actinobacillus pleuropneumoniae serotype 7 (strain AP76) protein is Sulfite reductase [NADPH] hemoprotein beta-component.